We begin with the raw amino-acid sequence, 454 residues long: GTPase Der (454 aa).

2 EngA-type G domains span residues 3–167 (PVIT…GIAE) and 181–354 (MKIA…AAAM). Residues 9 to 16 (GRPNVGKS), 56 to 60 (DTGGF), 119 to 122 (NKTE), 187 to 194 (GRPNVGKS), 234 to 238 (DTAGL), and 299 to 302 (NKWD) each bind GTP. The region spanning 355–439 (AKLPTPRLTR…PLRIQMNTAK (85 aa)) is the KH-like domain.

This sequence belongs to the TRAFAC class TrmE-Era-EngA-EngB-Septin-like GTPase superfamily. EngA (Der) GTPase family. Associates with the 50S ribosomal subunit.

In terms of biological role, GTPase that plays an essential role in the late steps of ribosome biogenesis. The chain is GTPase Der from Polynucleobacter asymbioticus (strain DSM 18221 / CIP 109841 / QLW-P1DMWA-1) (Polynucleobacter necessarius subsp. asymbioticus).